The following is a 383-amino-acid chain: ATP phosphoribosyltransferase regulatory subunit (383 aa).

The protein belongs to the class-II aminoacyl-tRNA synthetase family. HisZ subfamily. Heteromultimer composed of HisG and HisZ subunits.

The protein localises to the cytoplasm. It functions in the pathway amino-acid biosynthesis; L-histidine biosynthesis; L-histidine from 5-phospho-alpha-D-ribose 1-diphosphate: step 1/9. In terms of biological role, required for the first step of histidine biosynthesis. May allow the feedback regulation of ATP phosphoribosyltransferase activity by histidine. The polypeptide is ATP phosphoribosyltransferase regulatory subunit (Neisseria gonorrhoeae (strain ATCC 700825 / FA 1090)).